A 164-amino-acid polypeptide reads, in one-letter code: Putative 4-hydroxy-4-methyl-2-oxoglutarate aldolase (164 aa).

Substrate is bound by residues 80-83 (GGNL) and Arg102. Residue Asp103 participates in a divalent metal cation binding.

Belongs to the class II aldolase/RraA-like family. As to quaternary structure, homotrimer. It depends on a divalent metal cation as a cofactor.

It catalyses the reaction 4-hydroxy-4-methyl-2-oxoglutarate = 2 pyruvate. The catalysed reaction is oxaloacetate + H(+) = pyruvate + CO2. In terms of biological role, catalyzes the aldol cleavage of 4-hydroxy-4-methyl-2-oxoglutarate (HMG) into 2 molecules of pyruvate. Also contains a secondary oxaloacetate (OAA) decarboxylase activity due to the common pyruvate enolate transition state formed following C-C bond cleavage in the retro-aldol and decarboxylation reactions. This chain is Putative 4-hydroxy-4-methyl-2-oxoglutarate aldolase, found in Burkholderia multivorans (strain ATCC 17616 / 249).